We begin with the raw amino-acid sequence, 203 residues long: Cytochrome c oxidase assembly protein CtaG (203 aa).

Over 1-19 (MDAGKAERRAGNGRRTDGR) the chain is Cytoplasmic. A helical; Signal-anchor for type II membrane protein membrane pass occupies residues 20–42 (RHLVVAAACAAFIAAMVGVTYAS). The Periplasmic segment spans residues 43–203 (VPLYAMFCAL…AAARASGTGG (161 aa)).

This sequence belongs to the COX11/CtaG family.

The protein resides in the cell inner membrane. In terms of biological role, exerts its effect at some terminal stage of cytochrome c oxidase synthesis, probably by being involved in the insertion of the copper B into subunit I. The sequence is that of Cytochrome c oxidase assembly protein CtaG from Xanthobacter autotrophicus (strain ATCC BAA-1158 / Py2).